The chain runs to 107 residues: Putative pterin-4-alpha-carbinolamine dehydratase (107 aa).

The protein belongs to the pterin-4-alpha-carbinolamine dehydratase family.

It carries out the reaction (4aS,6R)-4a-hydroxy-L-erythro-5,6,7,8-tetrahydrobiopterin = (6R)-L-erythro-6,7-dihydrobiopterin + H2O. The chain is Putative pterin-4-alpha-carbinolamine dehydratase from Rubrobacter xylanophilus (strain DSM 9941 / JCM 11954 / NBRC 16129 / PRD-1).